The sequence spans 141 residues: ATP synthase epsilon chain (141 aa).

The protein belongs to the ATPase epsilon chain family. F-type ATPases have 2 components, CF(1) - the catalytic core - and CF(0) - the membrane proton channel. CF(1) has five subunits: alpha(3), beta(3), gamma(1), delta(1), epsilon(1). CF(0) has three main subunits: a, b and c.

It is found in the cell inner membrane. Its function is as follows. Produces ATP from ADP in the presence of a proton gradient across the membrane. The polypeptide is ATP synthase epsilon chain (Hahella chejuensis (strain KCTC 2396)).